Consider the following 148-residue polypeptide: MDHGKYLLTIFLNDDDSFFKYLAAQEDDVAMSDVHTIVDYLNFLLALLIKSKDKLEAVGYYYAPLSEEYKAVFDFTDTKSLKQLFNKQPVYVESDSPICVDKGYLADFVLATTRLKKQLPLVLDKEVTYVDPYKDKRFANILSILHKN.

In Myxoma virus (strain Lausanne) (MYXV), this protein is MF7 protein.